We begin with the raw amino-acid sequence, 176 residues long: bZIP transcription factor 8 (176 aa).

The segment at 44–101 (PNTSGGSDESMSDGSKIDPKRSPKYLEKRMKNNEAAKKSRASRKHREQKNQTENELLK) is disordered. Positions 47-57 (SGGSDESMSDG) are enriched in low complexity. The segment covering 58–80 (SKIDPKRSPKYLEKRMKNNEAAK) has biased composition (basic and acidic residues). The bZIP domain maps to 65–128 (SPKYLEKRMK…AQMQITIRDM (64 aa)). The segment at 67-92 (KYLEKRMKNNEAAKKSRASRKHREQK) is basic motif. Basic residues predominate over residues 81–90 (KSRASRKHRE). Positions 91-101 (QKNQTENELLK) are enriched in basic and acidic residues. A leucine-zipper region spans residues 100-107 (LKRKNAAL).

This sequence belongs to the bZIP family.

This Caenorhabditis elegans protein is bZIP transcription factor 8 (zip-8).